The following is a 466-amino-acid chain: GTPase Der (466 aa).

2 consecutive EngA-type G domains span residues P3–P166 and I177–T350. GTP is bound by residues G9–S16, D56–I60, N118–D121, G183–S190, D230–V234, and N295–D298. One can recognise a KH-like domain in the interval D351–D435. A disordered region spans residues K442 to R466. Residues R455 to R466 show a composition bias toward basic and acidic residues.

It belongs to the TRAFAC class TrmE-Era-EngA-EngB-Septin-like GTPase superfamily. EngA (Der) GTPase family. In terms of assembly, associates with the 50S ribosomal subunit.

In terms of biological role, GTPase that plays an essential role in the late steps of ribosome biogenesis. The polypeptide is GTPase Der (Cellvibrio japonicus (strain Ueda107) (Pseudomonas fluorescens subsp. cellulosa)).